Reading from the N-terminus, the 201-residue chain is Syndecan-2 (201 aa).

Residues 1 to 18 (MRRAWILLTLGLVACVSA) form the signal peptide. Over 19–144 (ESRAELTSDK…HSDSLFKRTE (126 aa)) the chain is Extracellular. Residues S41, S55, and S57 are each glycosylated (O-linked (Xyl...) (glycosaminoglycan) serine). 2 disordered regions span residues 42–70 (GVYP…ELTT) and 90–130 (TLNI…DTNV). The span at 90 to 102 (TLNIQNKIPAQTK) shows a compositional bias: polar residues. T101 carries O-linked (GalNAc...) threonine glycosylation. Residues 103–123 (SPEETDKEKVHLSDSERKMDP) show a composition bias toward basic and acidic residues. S115 is modified (phosphoserine; by FAM20C). Residues 145 to 169 (VLAAVIAGGVIGFLFAIFLILLLVY) form a helical membrane-spanning segment. Residues 170-201 (RMRKKDEGSYDLGERKPSSAAYQKAPTKEFYA) are Cytoplasmic-facing. The interval 178 to 201 (SYDLGERKPSSAAYQKAPTKEFYA) is disordered. S187 bears the Phosphoserine mark.

Belongs to the syndecan proteoglycan family. As to quaternary structure, interacts (via cytoplasmic domain) with SARM1. Forms a complex with SDCBP and PDCD6IP. O-glycosylated with core 1 or possibly core 8 glycans. Contains heparan sulfate. Also contains chondroitin sulfate.

The protein localises to the membrane. Its function is as follows. Cell surface proteoglycan which regulates dendritic arbor morphogenesis. The chain is Syndecan-2 (SDC2) from Homo sapiens (Human).